The sequence spans 141 residues: uncharacterized protein (141 aa).

Residues 1 to 39 show a composition bias toward low complexity; sequence MNNNNNNNNNNNNNNNNNNNNNNNNNSYDSNHSSSSYTS. The segment at 1 to 48 is disordered; sequence MNNNNNNNNNNNNNNNNNNNNNNNNNSYDSNHSSSSYTSENQNREQQF. A helical membrane pass occupies residues 109–129; it reads FFCKIILVFICLVAIYSLVVI.

The protein localises to the membrane. This is an uncharacterized protein from Dictyostelium discoideum (Social amoeba).